The primary structure comprises 406 residues: Copper transport protein CTR1 (406 aa).

At 1–152 (MEGMNMGSSM…HHLHANNSGK (152 aa)) the chain is on the cytoplasmic side. 3 repeat units span residues 9-27 (SMNM…SSMA), 28-46 (SMSM…SSMS), and 47-65 (SMSM…STMS). Residues 9–65 (SMNMDAMSSASKTVASSMASMSMDAMSSASKTILSSMSSMSMEAMSSASKTLASTMS) are 3 X 19 AA tandem repeats of S-M-X-M-X-A-M-S-S-A-S-K-T-X-X-S-X-M-X. The interval 71-117 (SMGSSSMSGMSMSMSSTPTSSASAQTTSDSSMSGMSGMSSSDNSSSS) is disordered. The helical transmembrane segment at 153-173 (AFGIFLLFVVAAFVYKLLLFV) threads the bilayer. At 174–250 (SWCLEVHWFK…RAFLVFTSTM (77 aa)) the chain is on the extracellular side. The chain crosses the membrane as a helical span at residues 251 to 271 (IIYMLMLATMSFVLTYVFAVI). At 272–406 (TGLALSEVFF…LLPAEKFTHN (135 aa)) the chain is on the cytoplasmic side. The short motif at 304 to 315 (CPGFGNCQCGRH) is the REP-III element. The interval 318–406 (PSPDPIAVAD…LLPAEKFTHN (89 aa)) is disordered. S344 carries the post-translational modification Phosphoserine. Residue K345 forms a Glycyl lysine isopeptide (Lys-Gly) (interchain with G-Cter in ubiquitin) linkage. Phosphoserine is present on S349. Composition is skewed to polar residues over residues 349-375 (SENN…NQAN) and 384-395 (SKLQEQSGNMDQ). Residue T356 is modified to Phosphothreonine. Position 369 is a phosphoserine (S369).

Homooligomer. Extensively O-glycosylated.

Its subcellular location is the cell membrane. It catalyses the reaction Cu(2+)(in) = Cu(2+)(out). Functionally, high-affinity copper transporter of plasma membrane that mediates copper uptake under low copper conditions. Copper transport through the high affinity system requiring CTRl supplies the iron transport multicopper ferroxidase FET3 with copper, which in turn is required for ferrous iron uptake. The energy for translocation is unlikely to be directly derived from ATP hydrolysis and the exact mechanism driving the transmembrane transport of copper has still to be determined. Binds 4 copper ions via its C-terminal cystein-rich domain and is able to deliver Cu(I) directly to both the chaperone ATX1 and to an N-terminal domain of the CCC2 protein. Also able to mediate the uptake of the anticancer drug cisplatin. The protein is Copper transport protein CTR1 of Saccharomyces cerevisiae (strain ATCC 204508 / S288c) (Baker's yeast).